A 144-amino-acid chain; its full sequence is Protein NrdI (144 aa).

It belongs to the NrdI family.

Functionally, probably involved in ribonucleotide reductase function. The chain is Protein NrdI from Streptococcus pyogenes serotype M4 (strain MGAS10750).